Reading from the N-terminus, the 1838-residue chain is Type III effector DspE (1838 aa).

Over residues 1-12 the composition is skewed to basic and acidic residues; that stretch reads MELKSLGTEHKA. Disordered stretches follow at residues 1–72, 86–163, 182–264, 281–300, 398–418, and 1480–1505; these read MELK…AAHQ, KKFS…PTQQ, MAHP…VATP, LEGT…LKGS, DGKS…KTML, and NLAA…SNNR. A compositionally biased stretch (low complexity) spans 27–46; the sequence is ALQQGSSSSSPQNAAASLAA. Over residues 91-103 the composition is skewed to polar residues; it reads SAPQGQPGTTHSK. Over residues 110–120 the composition is skewed to basic and acidic residues; the sequence is LLARDDGETQH. Positions 407–418 are enriched in polar residues; it reads GSGTQSHNKTML. Residues 1480-1502 are compositionally biased toward low complexity; sequence NLAAGSRERSTTSGQFGSTTSAS.

Belongs to the AvrE family. Interacts with the chaperone DspF (DspB/F).

The protein localises to the secreted. It is found in the host cell. With respect to regulation, polyamidoamine dendrimers inhibit channel and virulence activities. Functionally, major virulence factor that may function as a water- and solute-permeable channel dedicated to creating osmotic/water potential perturbation and a water- and nutrient-rich apoplast in which bacteria multiply within the infected plant tissues. Expression in Xenopus oocytes results in inward and outward currents, permeability to water and osmolarity-dependent oocyte swelling and bursting. Its function is as follows. Acts as a major cell-death inducer during fire blight, a necrotic disease affecting plants of the rosaceous family, and during hypersensitive response (HR) on non-host plants. Essential for pathogenicity on host plants. Contributes quantitatively and in a strain-dependent fashion to HR elicitation in non-host plants such as tobacco. Induces cell death in leaves of apple, a host plant, and tobacco, a non-host plant. Also triggers necrosis in the widely used model, non-host, N.benthamiana and in yeast. Required for the transient multiplication and survival of E.amylovora in non-host A.thaliana leaves. In A.thaliana, triggers electrolyte leakage, activation of defense pathways, reactive oxygen species (ROS) accumulation and cell death. The toxicity of DspE in A.thaliana is associated with an early repression of de novo protein synthesis. This is Type III effector DspE from Erwinia amylovora (Fire blight bacteria).